The chain runs to 432 residues: Histidine--tRNA ligase (432 aa).

Belongs to the class-II aminoacyl-tRNA synthetase family.

It localises to the cytoplasm. The catalysed reaction is tRNA(His) + L-histidine + ATP = L-histidyl-tRNA(His) + AMP + diphosphate + H(+). The sequence is that of Histidine--tRNA ligase from Pyrococcus furiosus (strain ATCC 43587 / DSM 3638 / JCM 8422 / Vc1).